The sequence spans 463 residues: Cysteine--tRNA ligase (463 aa).

Cys33 contributes to the Zn(2+) binding site. Positions 35 to 45 (PTVYDFAHIGN) match the 'HIGH' region motif. Cys221, His246, and Glu250 together coordinate Zn(2+). The short motif at 279 to 283 (KMSKS) is the 'KMSKS' region element. Lys282 is an ATP binding site.

The protein belongs to the class-I aminoacyl-tRNA synthetase family. Monomer. Requires Zn(2+) as cofactor.

It localises to the cytoplasm. The enzyme catalyses tRNA(Cys) + L-cysteine + ATP = L-cysteinyl-tRNA(Cys) + AMP + diphosphate. This chain is Cysteine--tRNA ligase, found in Rhizobium leguminosarum bv. trifolii (strain WSM2304).